We begin with the raw amino-acid sequence, 87 residues long: Small ribosomal subunit protein bS20 (87 aa).

Residues 1 to 28 (MANSAQARKRARQASAQRDHNMSQRSEL) form a disordered region. Basic and acidic residues predominate over residues 17–28 (QRDHNMSQRSEL).

It belongs to the bacterial ribosomal protein bS20 family.

Binds directly to 16S ribosomal RNA. This chain is Small ribosomal subunit protein bS20, found in Thiobacillus denitrificans (strain ATCC 25259 / T1).